A 161-amino-acid polypeptide reads, in one-letter code: MKKIEISGTCLSFHLLFGLEIRMRRIVFAGVILFRLLGVILFRLLGVILFGRLGDLGTCQTKPGQYWKEEVHIQDVGGLICRACNLSLPFHGCLLDLGTCQAEPGQYCKEEVHIQGGIQWYSVKGCTKNTSECFKSTLVKRILQLHELVTTHCCNHSLCNF.

A helical membrane pass occupies residues 30–50 (GVILFRLLGVILFRLLGVILF).

The protein resides in the membrane. This is an uncharacterized protein from Homo sapiens (Human).